Here is a 261-residue protein sequence, read N- to C-terminus: MAAMKRLLASSLLILLSGCSLMQPPIESAETIQGTTTVDAVEGDKSESNSGLTDALRNRTDPVAGDPAWAPIHPKGKPEHYAAETGSLFNLASSSSMYDDSKPRGVGDIITVTLNESTKAAKSADADLNKKNDASMDPLAVGGKDLTIGDYNFSYALKNDNKFSGSAAANQSNSMSGSITVEVIEVLANGNLVIRGEKWLTLNTGDEYIRLSGTIRPDDIDFDNTIASNRISNARIQYSGTGTNQDMQEPGFLARFFNVSL.

Residues 1–18 form the signal peptide; that stretch reads MAAMKRLLASSLLILLSG. Residue cysteine 19 is the site of N-palmitoyl cysteine attachment. Cysteine 19 carries S-diacylglycerol cysteine lipidation. Positions 37–67 are disordered; it reads TVDAVEGDKSESNSGLTDALRNRTDPVAGDP.

It belongs to the FlgH family. In terms of assembly, the basal body constitutes a major portion of the flagellar organelle and consists of four rings (L,P,S, and M) mounted on a central rod.

Its subcellular location is the cell outer membrane. It localises to the bacterial flagellum basal body. In terms of biological role, assembles around the rod to form the L-ring and probably protects the motor/basal body from shearing forces during rotation. The sequence is that of Flagellar L-ring protein from Vibrio cholerae serotype O1 (strain ATCC 39541 / Classical Ogawa 395 / O395).